The sequence spans 62 residues: Ponericin-W-like 32.2 (62 aa).

The signal sequence occupies residues 1–23; sequence MKCKKQLLVIFFAYFLVVNESEA. Positions 49–62 are excised as a propeptide; sequence RALMKRDLEDIMDP.

It belongs to the non-disulfide-bridged peptide (NDBP) superfamily. Medium-length antimicrobial peptide (group 3) family. Ponericin-W subfamily. Expressed by the venom gland.

It is found in the secreted. Its subcellular location is the target cell membrane. Antimicrobial peptide with potent activity against a range of Gram-positive and Gram-negative bacteria. Has high hemolytic activity against erythrocytes. May act by disrupting the integrity of the bacterial cell membrane. The polypeptide is Ponericin-W-like 32.2 (Lychas mucronatus (Chinese swimming scorpion)).